The following is a 373-amino-acid chain: Phosphoserine aminotransferase (373 aa).

Position 46 (Arg-46) interacts with L-glutamate. Pyridoxal 5'-phosphate-binding residues include Phe-104, Thr-150, Asp-172, and Gln-195. Lys-196 bears the N6-(pyridoxal phosphate)lysine mark. Residue Asn-247–Thr-248 participates in pyridoxal 5'-phosphate binding.

It belongs to the class-V pyridoxal-phosphate-dependent aminotransferase family. SerC subfamily. In terms of assembly, homodimer. It depends on pyridoxal 5'-phosphate as a cofactor.

The protein resides in the cytoplasm. It carries out the reaction O-phospho-L-serine + 2-oxoglutarate = 3-phosphooxypyruvate + L-glutamate. The catalysed reaction is 4-(phosphooxy)-L-threonine + 2-oxoglutarate = (R)-3-hydroxy-2-oxo-4-phosphooxybutanoate + L-glutamate. Its pathway is amino-acid biosynthesis; L-serine biosynthesis; L-serine from 3-phospho-D-glycerate: step 2/3. It functions in the pathway cofactor biosynthesis; pyridoxine 5'-phosphate biosynthesis; pyridoxine 5'-phosphate from D-erythrose 4-phosphate: step 3/5. Its function is as follows. Catalyzes the reversible conversion of 3-phosphohydroxypyruvate to phosphoserine and of 3-hydroxy-2-oxo-4-phosphonooxybutanoate to phosphohydroxythreonine. This chain is Phosphoserine aminotransferase, found in Rhodococcus opacus (strain B4).